The chain runs to 908 residues: DNA mismatch repair protein MutS (908 aa).

629–636 (GPNMAGKS) is an ATP binding site. The tract at residues 822–863 (ADEADGAPSEDPPSEDPPSGDGVRAKKGEADAVPDLEDSQAN) is disordered.

This sequence belongs to the DNA mismatch repair MutS family.

Its function is as follows. This protein is involved in the repair of mismatches in DNA. It is possible that it carries out the mismatch recognition step. This protein has a weak ATPase activity. In Salinibacter ruber (strain DSM 13855 / M31), this protein is DNA mismatch repair protein MutS.